The primary structure comprises 498 residues: ATP synthase subunit beta, chloroplastic (498 aa).

T6 is modified (phosphothreonine). At S13 the chain carries Phosphoserine. Residue 172-179 (GGAGVGKT) participates in ATP binding.

The protein belongs to the ATPase alpha/beta chains family. As to quaternary structure, F-type ATPases have 2 components, CF(1) - the catalytic core - and CF(0) - the membrane proton channel. CF(1) has five subunits: alpha(3), beta(3), gamma(1), delta(1), epsilon(1). CF(0) has four main subunits: a(1), b(1), b'(1) and c(9-12).

The protein localises to the plastid. Its subcellular location is the chloroplast thylakoid membrane. It carries out the reaction ATP + H2O + 4 H(+)(in) = ADP + phosphate + 5 H(+)(out). Its function is as follows. Produces ATP from ADP in the presence of a proton gradient across the membrane. The catalytic sites are hosted primarily by the beta subunits. This is ATP synthase subunit beta, chloroplastic from Draba nemorosa (Woodland whitlowgrass).